The following is a 752-amino-acid chain: Translation initiation factor IF-2 (752 aa).

The disordered stretch occupies residues 26 to 167 (RQGMGVKSHM…QPTQRKDKPL (142 aa)). A compositionally biased stretch (polar residues) spans 34–47 (HMSSVTPDQAQQLR). Over residues 72–81 (KQNNHQAQNH) the composition is skewed to low complexity. The span at 83-96 (QHHDHDKTQNERPQ) shows a compositional bias: basic and acidic residues. Polar residues predominate over residues 101-129 (SRSNNGTKDNNQHQNNGGRFGGSLNNDQG). The span at 131 to 150 (NGKRFNKKNKKNKKHNKNKR) shows a compositional bias: basic residues. Residues 151–167 (LREVAHKQPTQRKDKPL) are compositionally biased toward basic and acidic residues. Residues 253–422 (TRPAVVTVMG…LLQAEMLELK (170 aa)) form the tr-type G domain. Residues 262–269 (GHVDHGKT) form a G1 region. Residue 262–269 (GHVDHGKT) participates in GTP binding. Residues 287 to 291 (GITQE) form a G2 region. The G3 stretch occupies residues 308–311 (DTPG). GTP is bound by residues 308–312 (DTPGH) and 362–365 (NKID). The tract at residues 362-365 (NKID) is G4. Positions 398 to 400 (SAK) are G5.

This sequence belongs to the TRAFAC class translation factor GTPase superfamily. Classic translation factor GTPase family. IF-2 subfamily.

Its subcellular location is the cytoplasm. Functionally, one of the essential components for the initiation of protein synthesis. Protects formylmethionyl-tRNA from spontaneous hydrolysis and promotes its binding to the 30S ribosomal subunits. Also involved in the hydrolysis of GTP during the formation of the 70S ribosomal complex. The sequence is that of Translation initiation factor IF-2 from Limosilactobacillus reuteri (strain DSM 20016) (Lactobacillus reuteri).